Reading from the N-terminus, the 245-residue chain is Ribosomal RNA small subunit methyltransferase G (245 aa).

Residues glycine 85, phenylalanine 90, 108–110 (DST), 136–137 (AE), and arginine 155 contribute to the S-adenosyl-L-methionine site.

It belongs to the methyltransferase superfamily. RNA methyltransferase RsmG family.

The protein localises to the cytoplasm. In terms of biological role, specifically methylates the N7 position of a guanine in 16S rRNA. This is Ribosomal RNA small subunit methyltransferase G from Nostoc sp. (strain PCC 7120 / SAG 25.82 / UTEX 2576).